The primary structure comprises 315 residues: Acetyl-coenzyme A carboxylase carboxyl transferase subunit alpha (315 aa).

A CoA carboxyltransferase C-terminal domain is found at 40–293 (LQDKSKTLTE…REELSSQLAM (254 aa)).

It belongs to the AccA family. Acetyl-CoA carboxylase is a heterohexamer composed of biotin carboxyl carrier protein (AccB), biotin carboxylase (AccC) and two subunits each of ACCase subunit alpha (AccA) and ACCase subunit beta (AccD).

It localises to the cytoplasm. The catalysed reaction is N(6)-carboxybiotinyl-L-lysyl-[protein] + acetyl-CoA = N(6)-biotinyl-L-lysyl-[protein] + malonyl-CoA. The protein operates within lipid metabolism; malonyl-CoA biosynthesis; malonyl-CoA from acetyl-CoA: step 1/1. Functionally, component of the acetyl coenzyme A carboxylase (ACC) complex. First, biotin carboxylase catalyzes the carboxylation of biotin on its carrier protein (BCCP) and then the CO(2) group is transferred by the carboxyltransferase to acetyl-CoA to form malonyl-CoA. The sequence is that of Acetyl-coenzyme A carboxylase carboxyl transferase subunit alpha from Pseudomonas syringae pv. tomato (strain ATCC BAA-871 / DC3000).